Reading from the N-terminus, the 30-residue chain is MWYLLWFVGILLMCSLSTLVLVWLDPRLKS.

Residues L4–L24 form a helical membrane-spanning segment.

This sequence belongs to the cytochrome ubiquinol oxidase subunit X family. In terms of assembly, able to interact with CydA and CydB upon overexpression.

The protein resides in the cell inner membrane. In terms of biological role, might be part of cytochrome bd-II oxidase (appB and appC). Able to restore reductant resistance to a cydX deletion mutant upon overexpression. CydX and this protein may have some functional overlap. The protein is Putative cytochrome bd-II ubiquinol oxidase subunit AppX (appX) of Escherichia coli (strain K12).